The sequence spans 138 residues: Large ribosomal subunit protein uL16c (138 aa).

Belongs to the universal ribosomal protein uL16 family. Part of the 50S ribosomal subunit.

It localises to the plastid. The protein localises to the chloroplast. In Phaeodactylum tricornutum (strain CCAP 1055/1), this protein is Large ribosomal subunit protein uL16c.